We begin with the raw amino-acid sequence, 356 residues long: DNA polymerase IV (356 aa).

In terms of domain architecture, UmuC spans isoleucine 6–glycine 187. The Mg(2+) site is built by aspartate 10 and aspartate 105. Residue glutamate 106 is part of the active site.

Belongs to the DNA polymerase type-Y family. Monomer. Requires Mg(2+) as cofactor.

Its subcellular location is the cytoplasm. The catalysed reaction is DNA(n) + a 2'-deoxyribonucleoside 5'-triphosphate = DNA(n+1) + diphosphate. In terms of biological role, poorly processive, error-prone DNA polymerase involved in untargeted mutagenesis. Copies undamaged DNA at stalled replication forks, which arise in vivo from mismatched or misaligned primer ends. These misaligned primers can be extended by PolIV. Exhibits no 3'-5' exonuclease (proofreading) activity. May be involved in translesional synthesis, in conjunction with the beta clamp from PolIII. In Staphylococcus aureus (strain JH1), this protein is DNA polymerase IV.